We begin with the raw amino-acid sequence, 236 residues long: Orotidine 5'-phosphate decarboxylase (236 aa).

Substrate contacts are provided by residues Asp17, Lys39, 66 to 75, Thr125, Arg186, Gln195, Gly215, and Arg216; that span reads DLKFHDIPNT. Residue Lys68 is the Proton donor of the active site.

The protein belongs to the OMP decarboxylase family. Type 1 subfamily. In terms of assembly, homodimer.

The catalysed reaction is orotidine 5'-phosphate + H(+) = UMP + CO2. Its pathway is pyrimidine metabolism; UMP biosynthesis via de novo pathway; UMP from orotate: step 2/2. Catalyzes the decarboxylation of orotidine 5'-monophosphate (OMP) to uridine 5'-monophosphate (UMP). This Buchnera aphidicola subsp. Acyrthosiphon pisum (strain APS) (Acyrthosiphon pisum symbiotic bacterium) protein is Orotidine 5'-phosphate decarboxylase.